Reading from the N-terminus, the 207-residue chain is Large ribosomal subunit protein uL4 (207 aa).

Positions 47-78 (GTAKTKTRAEVRGGGKKPWRQKGTGRARQGSI) are disordered. Basic residues predominate over residues 60–71 (GGKKPWRQKGTG).

This sequence belongs to the universal ribosomal protein uL4 family. Part of the 50S ribosomal subunit.

One of the primary rRNA binding proteins, this protein initially binds near the 5'-end of the 23S rRNA. It is important during the early stages of 50S assembly. It makes multiple contacts with different domains of the 23S rRNA in the assembled 50S subunit and ribosome. Its function is as follows. Forms part of the polypeptide exit tunnel. In Acholeplasma laidlawii (strain PG-8A), this protein is Large ribosomal subunit protein uL4.